The chain runs to 423 residues: Glutamyl-tRNA(Gln) amidotransferase subunit A (423 aa).

Active-site charge relay system residues include lysine 28 and serine 103. Serine 127 acts as the Acyl-ester intermediate in catalysis.

This sequence belongs to the amidase family. GatA subfamily. Heterotrimer of A, B and C subunits.

It catalyses the reaction L-glutamyl-tRNA(Gln) + L-glutamine + ATP + H2O = L-glutaminyl-tRNA(Gln) + L-glutamate + ADP + phosphate + H(+). Allows the formation of correctly charged Gln-tRNA(Gln) through the transamidation of misacylated Glu-tRNA(Gln) in organisms which lack glutaminyl-tRNA synthetase. The reaction takes place in the presence of glutamine and ATP through an activated gamma-phospho-Glu-tRNA(Gln). This is Glutamyl-tRNA(Gln) amidotransferase subunit A from Halobacterium salinarum (strain ATCC 700922 / JCM 11081 / NRC-1) (Halobacterium halobium).